Reading from the N-terminus, the 211-residue chain is Cytochrome c biogenesis ATP-binding export protein CcmA (211 aa).

An ABC transporter domain is found at 1-211 (MAIHNLACVR…RMAEATSCFG (211 aa)). 33-40 (GSNGAGKT) lines the ATP pocket.

It belongs to the ABC transporter superfamily. CcmA exporter (TC 3.A.1.107) family. The complex is composed of two ATP-binding proteins (CcmA) and two transmembrane proteins (CcmB).

The protein localises to the cell inner membrane. The catalysed reaction is heme b(in) + ATP + H2O = heme b(out) + ADP + phosphate + H(+). Its function is as follows. Part of the ABC transporter complex CcmAB involved in the biogenesis of c-type cytochromes; once thought to export heme, this seems not to be the case, but its exact role is uncertain. Responsible for energy coupling to the transport system. The sequence is that of Cytochrome c biogenesis ATP-binding export protein CcmA from Sodalis glossinidius (strain morsitans).